The following is a 495-amino-acid chain: MKYSAKNTALSQIDSNIILAVFEDGELSPTAMQFDQLSQGYLTRLIQVGEVSGKQGQVLILRDIPNCQAQRIFIVGCGKKDKITERQYKQIIQKTIQTILETQASEVVSFLNEIELKNRDIHWNIRFAIETIEASHYQFDTFKSKKTDASLVLDRFIFNVPTELQQNALQAISYAQAIALGVKYAKDIANCPPNVCNPTYLAEQAQSLAKHSNLINVQVLGEKEMAELNMFSYLAVSQGSANEAKMSVIEYRNHPDKNAKPIVLVGKGLTFDAGGISLKPADSMDEMKYDMCGAASVFGVMYALATLQLPLNVIGVLAGCENLPDGNSYRPGDILTTMSGLTVEVLNTDAEGRLVLCDALTYVERFNPELVIDVATLTGACVVALGQHNSGLIATDGKLAEKLLNAAEETTDKAWRLPLSEEYQEQLKSNFADLANIGGRWGGAITAGAFLANFTKNYPWAHLDIAGTAWLQGTNKGATGRPVSLLTQFLINQSK.

Residues K267 and D272 each coordinate Mn(2+). The active site involves K279. D290, D349, and E351 together coordinate Mn(2+). The active site involves R353.

This sequence belongs to the peptidase M17 family. Mn(2+) serves as cofactor.

The protein localises to the cytoplasm. It carries out the reaction Release of an N-terminal amino acid, Xaa-|-Yaa-, in which Xaa is preferably Leu, but may be other amino acids including Pro although not Arg or Lys, and Yaa may be Pro. Amino acid amides and methyl esters are also readily hydrolyzed, but rates on arylamides are exceedingly low.. It catalyses the reaction Release of an N-terminal amino acid, preferentially leucine, but not glutamic or aspartic acids.. Its function is as follows. Presumably involved in the processing and regular turnover of intracellular proteins. Catalyzes the removal of unsubstituted N-terminal amino acids from various peptides. The protein is Probable cytosol aminopeptidase of Histophilus somni (strain 2336) (Haemophilus somnus).